Here is a 142-residue protein sequence, read N- to C-terminus: Transcriptional regulator MraZ (142 aa).

2 SpoVT-AbrB domains span residues Glu5 to Glu47 and Ala76 to Lys119.

This sequence belongs to the MraZ family. Forms oligomers.

Its subcellular location is the cytoplasm. The protein resides in the nucleoid. This Clostridium tetani (strain Massachusetts / E88) protein is Transcriptional regulator MraZ.